We begin with the raw amino-acid sequence, 394 residues long: Large ribosomal subunit protein bL27m (394 aa).

The transit peptide at 1-34 (MSFIKQVGKLIRPNDYSSSIFQTSFLNNVIQVRT) directs the protein to the mitochondrion. Disordered regions lie at residues 36 to 57 (TKRAAGSKTNKNDSAGRRLGPK) and 145 to 181 (AEAEKEENHMSRKEFLQQPELEKTRQEQQNQEEQRAS). Residues 145 to 170 (AEAEKEENHMSRKEFLQQPELEKTRQ) show a composition bias toward basic and acidic residues.

This sequence belongs to the bacterial ribosomal protein bL27 family.

The protein resides in the mitochondrion. Functionally, component of the large subunit of mitochondrial ribosome. The protein is Large ribosomal subunit protein bL27m (MRPL2) of Debaryomyces hansenii (strain ATCC 36239 / CBS 767 / BCRC 21394 / JCM 1990 / NBRC 0083 / IGC 2968) (Yeast).